The following is a 261-amino-acid chain: Histone H1-I (261 aa).

Residues 1–22 show a composition bias toward low complexity; sequence MSETEAAPVVAPAAEAAPAAEA. 2 disordered regions span residues 1–63 and 125–261; these read MSET…PPYI and FKLS…KGKK. Residues 41 to 50 show a composition bias toward basic and acidic residues; it reads APKEPKAPKE. Positions 58–129 constitute an H15 domain; it reads THPPYIEMVK…KVKGSFKLSE (72 aa). Residues 133–142 are compositionally biased toward basic residues; the sequence is AKAKKSTPKK. 2 consecutive repeat copies span residues 136–140 and 188–192. Residues 136-250 form a 7 X 5 AA repeats of K-K-[AS]-T-P region; the sequence is KKSTPKKAKA…KKAPAKKSTP (115 aa). The DNA-binding element occupies 139 to 142; it reads TPKK. Residues 143–198 are compositionally biased toward basic and acidic residues; the sequence is AKADGEAKPKKSEAKPKKAEAVKKTKAPKEKVERPKKEKKEKVEKKKATPKAEKPK. The stretch at 199–203 is one 3; approximate repeat; the sequence is KAATP. 4 repeat units span residues 209–213, 230–234, 236–240, and 246–250. Over residues 227 to 250 the composition is skewed to basic residues; that stretch reads AKPKKATPSKKAAPKKAPAKKSTP. Residues 251–261 are compositionally biased toward basic and acidic residues; that stretch reads KAKEAKSKGKK.

It belongs to the histone H1/H5 family.

It localises to the nucleus. The protein localises to the chromosome. Functionally, histones H1 are necessary for the condensation of nucleosome chains into higher-order structures. This chain is Histone H1-I (H1-I), found in Volvox carteri (Green alga).